The sequence spans 620 residues: MRRQQSGLACEECRRRKARCDRVRPQCGICADAGRTCIVVDKRSPRGPKKGQLKDLRYRLDGTIGCDMDELQMLNFASSESISASDGQEAIDWTLAYDCREERSGTWNHLDISNPRPCIITPISPIQTSASEMTPKGELDMSDLMQADLDLLYFERVHPIVPMIHKRRYLSWANEKTVSPARACLRSAMRTIAAAMSAQFCAFSDKLYACTRSMLEMQDVQGENGLPWMTTTRASRRRIEHEMIQAWLLLAHCEFLRKPEQDALLASTRAVRLLQLSRLFDIDMHDDETSPNENSGSCPSVSPSTTQNLPDEAWIETEEKRRTLWTAFVLDCLSSMLSDRPSMLHEEMINTRLPMPERDFQGGQRPTPMGFLPETMGKTGDCETLSSFAQCVVLANLFGRCIAHRRLAQSVSFPESGSESKSRQFWMRHEWLAAAAAHATRTMPPTQAPNECKSETTKCDPLAAFNRILAYSACISLSETAEARAWETLDDHTLALSYRQVASQAAYEIALLIQKAPRIAFFKMHPVLPNAIYLAARFLRTTTPHFATPAEHDHNSIHHLLVALGYLSSVNNLARDLLVKAEADVGKSARIATEVTGSNWDALMGDTSRHIGMMETSISV.

Positions 10-37 (CEECRRRKARCDRVRPQCGICADAGRTC) form a DNA-binding region, zn(2)-C6 fungal-type. The interval 285-308 (HDDETSPNENSGSCPSVSPSTTQN) is disordered. Polar residues predominate over residues 291–308 (PNENSGSCPSVSPSTTQN).

Its subcellular location is the nucleus. In terms of biological role, transcription factor that acts as the main regulator of the gene cluster that mediates the biosynthesis of sorbicillinoids, a diverse group of yellow secondary metabolites that restrict growth of competing pathogenic fungi but not of bacteria. The polypeptide is Sorbicillinoid biosynthetic cluster transcription factor 1 (Penicillium rubens (strain ATCC 28089 / DSM 1075 / NRRL 1951 / Wisconsin 54-1255) (Penicillium chrysogenum)).